The chain runs to 176 residues: Large ribosomal subunit protein uL16 (176 aa).

It belongs to the universal ribosomal protein uL16 family.

The sequence is that of Large ribosomal subunit protein uL16 from Halorubrum lacusprofundi (strain ATCC 49239 / DSM 5036 / JCM 8891 / ACAM 34).